We begin with the raw amino-acid sequence, 211 residues long: Thiamine-phosphate synthase (211 aa).

4-amino-2-methyl-5-(diphosphooxymethyl)pyrimidine contacts are provided by residues 37–41 (QLRIK) and Asn-69. The Mg(2+) site is built by Asp-70 and Asp-89. Ser-108 provides a ligand contact to 4-amino-2-methyl-5-(diphosphooxymethyl)pyrimidine. A 2-[(2R,5Z)-2-carboxy-4-methylthiazol-5(2H)-ylidene]ethyl phosphate-binding site is contributed by 134-136 (TQT). Position 137 (Lys-137) interacts with 4-amino-2-methyl-5-(diphosphooxymethyl)pyrimidine. Residues Gly-166 and 186-187 (VS) each bind 2-[(2R,5Z)-2-carboxy-4-methylthiazol-5(2H)-ylidene]ethyl phosphate.

This sequence belongs to the thiamine-phosphate synthase family. The cofactor is Mg(2+).

The catalysed reaction is 2-[(2R,5Z)-2-carboxy-4-methylthiazol-5(2H)-ylidene]ethyl phosphate + 4-amino-2-methyl-5-(diphosphooxymethyl)pyrimidine + 2 H(+) = thiamine phosphate + CO2 + diphosphate. It catalyses the reaction 2-(2-carboxy-4-methylthiazol-5-yl)ethyl phosphate + 4-amino-2-methyl-5-(diphosphooxymethyl)pyrimidine + 2 H(+) = thiamine phosphate + CO2 + diphosphate. It carries out the reaction 4-methyl-5-(2-phosphooxyethyl)-thiazole + 4-amino-2-methyl-5-(diphosphooxymethyl)pyrimidine + H(+) = thiamine phosphate + diphosphate. Its pathway is cofactor biosynthesis; thiamine diphosphate biosynthesis; thiamine phosphate from 4-amino-2-methyl-5-diphosphomethylpyrimidine and 4-methyl-5-(2-phosphoethyl)-thiazole: step 1/1. Its function is as follows. Condenses 4-methyl-5-(beta-hydroxyethyl)thiazole monophosphate (THZ-P) and 2-methyl-4-amino-5-hydroxymethyl pyrimidine pyrophosphate (HMP-PP) to form thiamine monophosphate (TMP). In Salmonella newport (strain SL254), this protein is Thiamine-phosphate synthase.